Consider the following 482-residue polypeptide: Catalase (482 aa).

The span at 1–11 (MNAMTNKTLTT) shows a compositional bias: polar residues. A disordered region spans residues 1–21 (MNAMTNKTLTTAAGAPVADNN). Active-site residues include His-57 and Asn-130. Tyr-340 lines the heme pocket.

The protein belongs to the catalase family. As to quaternary structure, homodimer. The cofactor is heme.

It catalyses the reaction 2 H2O2 = O2 + 2 H2O. In terms of biological role, decomposes hydrogen peroxide into water and oxygen; serves to protect cells from the toxic effects of hydrogen peroxide. The protein is Catalase (katA) of Bordetella bronchiseptica (strain ATCC BAA-588 / NCTC 13252 / RB50) (Alcaligenes bronchisepticus).